The primary structure comprises 1131 residues: Phytochrome B1 (1131 aa).

Positions 1–11 (MASGSRTKHSY) are enriched in basic residues. The segment at 1–26 (MASGSRTKHSYHNSSQGQAQSSGTSN) is disordered. The segment covering 14–25 (SSQGQAQSSGTS) has biased composition (low complexity). A GAF domain is found at 229 to 408 (DIKLLCDTVV…AFGLQLNMEL (180 aa)). Cys334 serves as a coordination point for phytochromobilin. PAS domains are found at residues 622-693 (VARE…LRGV) and 756-808 (DYKA…GEIF). The 221-residue stretch at 904 to 1124 (YICQEVKSPL…MIILDLPMTR (221 aa)) folds into the Histidine kinase domain.

Belongs to the phytochrome family. In terms of assembly, homodimer. Post-translationally, contains one covalently linked phytochromobilin chromophore.

Functionally, regulatory photoreceptor which exists in two forms that are reversibly interconvertible by light: the Pr form that absorbs maximally in the red region of the spectrum and the Pfr form that absorbs maximally in the far-red region. Photoconversion of Pr to Pfr induces an array of morphogenic responses, whereas reconversion of Pfr to Pr cancels the induction of those responses. Pfr controls the expression of a number of nuclear genes including those encoding the small subunit of ribulose-bisphosphate carboxylase, chlorophyll A/B binding protein, protochlorophyllide reductase, rRNA, etc. It also controls the expression of its own gene(s) in a negative feedback fashion. The sequence is that of Phytochrome B1 from Solanum lycopersicum (Tomato).